Here is a 523-residue protein sequence, read N- to C-terminus: Non-specific phospholipase C3 (523 aa).

The segment at 44–64 (DGVSESEPRSNPLSTSDPNSA) is disordered. Positions 52 to 64 (RSNPLSTSDPNSA) are enriched in polar residues.

Belongs to the bacterial phospholipase C family. As to expression, expressed in root tips, cotyledons, on leaf margins, stems, young anthers and funiculus.

It catalyses the reaction a 1-acyl-sn-glycero-3-phosphate + H2O = a 1-acyl-sn-glycerol + phosphate. Functionally, possesses specific phosphatase activity toward lysophosphatidic acid (LPA) in vitro. Does not show phospholipase C activity. May play a role in signal transduction and storage lipid synthesis. May be involved in brassinolide-mediated signaling in root development. This Arabidopsis thaliana (Mouse-ear cress) protein is Non-specific phospholipase C3 (NPC3).